Here is a 208-residue protein sequence, read N- to C-terminus: Orotidine 5'-phosphate decarboxylase (208 aa).

Residues aspartate 7, lysine 29, 57 to 66 (DLKLADIPNT), serine 109, 162 to 172 (PGIGAQGGKAK), glycine 185, and arginine 186 each bind substrate. Catalysis depends on lysine 59, which acts as the Proton donor.

Belongs to the OMP decarboxylase family. Type 1 subfamily. As to quaternary structure, homodimer.

It carries out the reaction orotidine 5'-phosphate + H(+) = UMP + CO2. Its pathway is pyrimidine metabolism; UMP biosynthesis via de novo pathway; UMP from orotate: step 2/2. Its function is as follows. Catalyzes the decarboxylation of orotidine 5'-monophosphate (OMP) to uridine 5'-monophosphate (UMP). The chain is Orotidine 5'-phosphate decarboxylase (pyrF) from Pyrococcus horikoshii (strain ATCC 700860 / DSM 12428 / JCM 9974 / NBRC 100139 / OT-3).